The following is a 387-amino-acid chain: MEETTDFLFFNKYSREFSYHFFGKFFFFKEINTKLIFFFERFNLFSFFTFFSIFILSRNLVHTKNFITALFTYTKATLKKQKKNFFIFFRISFFFVVFLFFYLLFSYTLENIPVSKLFFVWGSWGAFLYIFISGFNFFGKKYTYGKYTEALQRFWKRSFSIFWLIEGFVFSAFIFLTFNASSEVVYSYDPQAFFKLHLISLRFFFFKMLALTFLILCFSMVSSLNLRKRFNMFIFNTTSLFVIIIFLIESDQYISIVNYCGFFEWSFNHSDFALDSDFRKSRTVNSYVLLIGIAKYLHILFIVFVWFFNFAKNLENNESRDYIAGTCTQNAIILYLLNWFAIYPYIKYFFRTYYYSTFSWFFFDFKNESAFNFARFLFNFWSSAFLN.

The protein resides in the mitochondrion. This is an uncharacterized protein from Paramecium tetraurelia.